We begin with the raw amino-acid sequence, 270 residues long: tRNA pseudouridine synthase A (270 aa).

Asp-60 acts as the Nucleophile in catalysis. Tyr-118 is a binding site for substrate.

The protein belongs to the tRNA pseudouridine synthase TruA family. Homodimer.

The catalysed reaction is uridine(38/39/40) in tRNA = pseudouridine(38/39/40) in tRNA. In terms of biological role, formation of pseudouridine at positions 38, 39 and 40 in the anticodon stem and loop of transfer RNAs. The polypeptide is tRNA pseudouridine synthase A (Cronobacter sakazakii (strain ATCC BAA-894) (Enterobacter sakazakii)).